Consider the following 414-residue polypeptide: Serine hydroxymethyltransferase (414 aa).

(6S)-5,6,7,8-tetrahydrofolate contacts are provided by residues L121 and 125 to 127 (GHL). K229 bears the N6-(pyridoxal phosphate)lysine mark.

It belongs to the SHMT family. In terms of assembly, homodimer. Pyridoxal 5'-phosphate is required as a cofactor.

Its subcellular location is the cytoplasm. It carries out the reaction (6R)-5,10-methylene-5,6,7,8-tetrahydrofolate + glycine + H2O = (6S)-5,6,7,8-tetrahydrofolate + L-serine. The protein operates within one-carbon metabolism; tetrahydrofolate interconversion. It participates in amino-acid biosynthesis; glycine biosynthesis; glycine from L-serine: step 1/1. Catalyzes the reversible interconversion of serine and glycine with tetrahydrofolate (THF) serving as the one-carbon carrier. This reaction serves as the major source of one-carbon groups required for the biosynthesis of purines, thymidylate, methionine, and other important biomolecules. Also exhibits THF-independent aldolase activity toward beta-hydroxyamino acids, producing glycine and aldehydes, via a retro-aldol mechanism. The chain is Serine hydroxymethyltransferase from Verminephrobacter eiseniae (strain EF01-2).